The primary structure comprises 131 residues: Fluoride-specific ion channel FluC (131 aa).

Transmembrane regions (helical) follow at residues A3–L23, I34–G54, and A62–L82. 2 residues coordinate Na(+): G80 and T83. A helical membrane pass occupies residues W101 to I121.

This sequence belongs to the fluoride channel Fluc/FEX (TC 1.A.43) family.

Its subcellular location is the cell inner membrane. It carries out the reaction fluoride(in) = fluoride(out). Its activity is regulated as follows. Na(+) is not transported, but it plays an essential structural role and its presence is essential for fluoride channel function. Fluoride-specific ion channel. Important for reducing fluoride concentration in the cell, thus reducing its toxicity. The sequence is that of Fluoride-specific ion channel FluC from Aromatoleum aromaticum (strain DSM 19018 / LMG 30748 / EbN1) (Azoarcus sp. (strain EbN1)).